The sequence spans 723 residues: Aspartate--tRNA(Asp/Asn) ligase 1 (723 aa).

Glu-206 contributes to the L-aspartate binding site. Residues 230–233 form an aspartate region; that stretch reads QLFK. Residue Arg-252 coordinates L-aspartate. ATP-binding positions include 252–254 and Gln-261; that span reads RDE. Position 481 (His-481) interacts with L-aspartate. Glu-516 provides a ligand contact to ATP. Arg-523 contributes to the L-aspartate binding site. 568-571 is a binding site for ATP; sequence GMDR.

Belongs to the class-II aminoacyl-tRNA synthetase family. Type 1 subfamily. As to quaternary structure, homodimer.

It is found in the cytoplasm. The enzyme catalyses tRNA(Asx) + L-aspartate + ATP = L-aspartyl-tRNA(Asx) + AMP + diphosphate. Aspartyl-tRNA synthetase with relaxed tRNA specificity since it is able to aspartylate not only its cognate tRNA(Asp) but also tRNA(Asn). Reaction proceeds in two steps: L-aspartate is first activated by ATP to form Asp-AMP and then transferred to the acceptor end of tRNA(Asp/Asn). This is Aspartate--tRNA(Asp/Asn) ligase 1 from Syntrophus aciditrophicus (strain SB).